Here is a 240-residue protein sequence, read N- to C-terminus: Probable transcriptional regulatory protein BLi02909/BL01150 (240 aa).

The segment covering 1-14 (MAGHSKWKNIQRRK) has biased composition (basic residues). Residues 1-21 (MAGHSKWKNIQRRKNAQDAKR) form a disordered region.

The protein belongs to the TACO1 family.

It is found in the cytoplasm. The polypeptide is Probable transcriptional regulatory protein BLi02909/BL01150 (Bacillus licheniformis (strain ATCC 14580 / DSM 13 / JCM 2505 / CCUG 7422 / NBRC 12200 / NCIMB 9375 / NCTC 10341 / NRRL NRS-1264 / Gibson 46)).